The primary structure comprises 330 residues: Carbonic anhydrase (330 aa).

The interval Met1–Ala109 is chloroplast transit peptide-like.

The protein belongs to the beta-class carbonic anhydrase family.

Its subcellular location is the cytoplasm. It carries out the reaction hydrogencarbonate + H(+) = CO2 + H2O. Its function is as follows. Reversible hydration of carbon dioxide. In Flaveria brownii (Brown's yellowtops), this protein is Carbonic anhydrase.